A 224-amino-acid chain; its full sequence is UPF0758 protein Pfl01_5539 (224 aa).

One can recognise an MPN domain in the interval 102–224; it reads ALENPQVVRD…PLSMAECGWM (123 aa). His173, His175, and Asp186 together coordinate Zn(2+). The short motif at 173 to 186 is the JAMM motif element; the sequence is HNHPSGNSDPSQAD.

It belongs to the UPF0758 family.

This is UPF0758 protein Pfl01_5539 from Pseudomonas fluorescens (strain Pf0-1).